The primary structure comprises 769 residues: 3-O-beta-D-glucopyranosyl-beta-D-glucuronide phosphorylase (769 aa).

Catalysis depends on Asp-457, which acts as the Proton donor.

This sequence belongs to the glycosyl hydrolase 94 family. As to quaternary structure, homodimer.

It is found in the cytoplasm. The enzyme catalyses 3-O-beta-D-glucosyl-D-glucuronate + phosphate = aldehydo-D-glucuronate + alpha-D-glucose 1-phosphate. The catalysed reaction is a 3-O-beta-D-glucosyl-beta-D-glucuronoside + phosphate = a beta-D-glucuronoside + alpha-D-glucose 1-phosphate. Functionally, glycoside phosphorylase that catalyzes the reversible phosphorolysis of 3-O-beta-D-glucosyl-D-glucuronate into D-glucuronic acid and alpha-D-glucose 1-phosphate. Cannot phosphorolyze cellobionic acid and laminaribiose. In the reverse direction, using alpha-D-glucose 1-phosphate as a donor substrate, the enzyme acts on D-glucuronate and its artificial derivative p-nitrophenyl-beta-D-glucuronide. The apparent catalytic efficiency towards p-nitrophenyl-beta-D-glucuronide is approximately 5-fold higher than that towards D-glucuronic acid. Is probably involved in the metabolism of oligosaccharides containing the 3-O-beta-D-glucopyranosyl-beta-D-glucuronide structure released from bacterial and plant acidic carbohydrates. In Paenibacillus borealis, this protein is 3-O-beta-D-glucopyranosyl-beta-D-glucuronide phosphorylase.